The sequence spans 469 residues: 6-phosphofructo-2-kinase/fructose-2,6-bisphosphatase 4 (469 aa).

The tract at residues 1–249 (MASPRELTQN…YYLMNIHVTP (249 aa)) is 6-phosphofructo-2-kinase. 46 to 54 (GLPARGKTY) provides a ligand contact to ATP. 2 residues coordinate beta-D-fructose 6-phosphate: arginine 79 and arginine 103. Aspartate 129 is a catalytic residue. Residues threonine 131 and arginine 137 each contribute to the beta-D-fructose 6-phosphate site. The active site involves cysteine 159. Position 168–173 (168–173 (NIVQVK)) interacts with ATP. Lysine 173, arginine 194, and tyrosine 198 together coordinate beta-D-fructose 6-phosphate. Residues 250–469 (RSIYLCRHGE…EALVTVPAHQ (220 aa)) are fructose-2,6-bisphosphatase. Arginine 256 serves as a coordination point for beta-D-fructose 2,6-bisphosphate. Catalysis depends on histidine 257, which acts as the Tele-phosphohistidine intermediate. The beta-D-fructose 2,6-bisphosphate site is built by asparagine 263, glycine 269, and arginine 306. Glutamate 326 (proton donor/acceptor) is an active-site residue. Residues tyrosine 337, arginine 351, lysine 355, tyrosine 366, glutamine 392, and arginine 396 each contribute to the beta-D-fructose 2,6-bisphosphate site. Position 348-351 (348-351 (FALR)) interacts with ATP. Residues 392–396 (QAVMR) and tyrosine 428 each bind ATP. Position 444 is a phosphothreonine; by PKC (threonine 444).

This sequence in the C-terminal section; belongs to the phosphoglycerate mutase family. In terms of assembly, homodimer.

The catalysed reaction is beta-D-fructose 2,6-bisphosphate + H2O = beta-D-fructose 6-phosphate + phosphate. It carries out the reaction beta-D-fructose 6-phosphate + ATP = beta-D-fructose 2,6-bisphosphate + ADP + H(+). With respect to regulation, the most important regulatory mechanism of these opposing activities is by phosphorylation and dephosphorylation of the enzyme. Functionally, synthesis and degradation of fructose 2,6-bisphosphate. In Homo sapiens (Human), this protein is 6-phosphofructo-2-kinase/fructose-2,6-bisphosphatase 4 (PFKFB4).